Here is a 366-residue protein sequence, read N- to C-terminus: Methylthioribose-1-phosphate isomerase (366 aa).

Asp-260 acts as the Proton donor in catalysis.

The protein belongs to the eIF-2B alpha/beta/delta subunits family. MtnA subfamily.

It is found in the cytoplasm. It localises to the nucleus. The enzyme catalyses 5-(methylsulfanyl)-alpha-D-ribose 1-phosphate = 5-(methylsulfanyl)-D-ribulose 1-phosphate. Its pathway is amino-acid biosynthesis; L-methionine biosynthesis via salvage pathway; L-methionine from S-methyl-5-thio-alpha-D-ribose 1-phosphate: step 1/6. Functionally, catalyzes the interconversion of methylthioribose-1-phosphate (MTR-1-P) into methylthioribulose-1-phosphate (MTRu-1-P). The polypeptide is Methylthioribose-1-phosphate isomerase (Caenorhabditis elegans).